A 222-amino-acid chain; its full sequence is 7-cyano-7-deazaguanine synthase (222 aa).

An ATP-binding site is contributed by 11-21 (FSGGQDSTTCL). Residues C187, C195, C198, and C201 each coordinate Zn(2+).

The protein belongs to the QueC family. Zn(2+) is required as a cofactor.

It carries out the reaction 7-carboxy-7-deazaguanine + NH4(+) + ATP = 7-cyano-7-deazaguanine + ADP + phosphate + H2O + H(+). It functions in the pathway purine metabolism; 7-cyano-7-deazaguanine biosynthesis. Catalyzes the ATP-dependent conversion of 7-carboxy-7-deazaguanine (CDG) to 7-cyano-7-deazaguanine (preQ(0)). This is 7-cyano-7-deazaguanine synthase from Actinobacillus pleuropneumoniae serotype 3 (strain JL03).